Consider the following 478-residue polypeptide: Probable L-ascorbate peroxidase 8, chloroplastic (478 aa).

Low complexity predominate over residues 1–13 (MAERIAASLLPAA). Disordered stretches follow at residues 1-31 (MAER…VSAA) and 44-66 (GGLR…RSGR). Residues 1–76 (MAERIAASLL…AGAGARAVVR (76 aa)) constitute a chloroplast transit peptide. Positions 14 to 26 (SPSPAPSPPPPRP) are enriched in pro residues. The active-site Proton acceptor is H117. Positions 245 to 276 (AHTLGRSRPDRSGWGKPETKYTKDGPGEPGGQ) are disordered. Position 246 (H246) interacts with heme b. A K(+)-binding site is contributed by T247. The segment covering 251–270 (SRPDRSGWGKPETKYTKDGP) has biased composition (basic and acidic residues). The K(+) site is built by T279 and D286. Residues 346–417 (AKFDPPEGFS…DNNGAAPQPE (72 aa)) form a disordered region. Positions 369–381 (PAPAPAAAPPPPP) are enriched in pro residues. A compositionally biased stretch (low complexity) spans 394–406 (PVTVGAAVASSPA). The helical transmembrane segment at 458–478 (YFLNIMLLIGGLAFLTSLLGS) threads the bilayer.

The protein belongs to the peroxidase family. Ascorbate peroxidase subfamily. Interacts with SWEET11/OS8N3. Heme b is required as a cofactor. As to expression, expressed in roots, leaves, stems and flowers. Expressed in leaves, shoots and panicles. Expressed at low levels in roots.

It localises to the plastid. Its subcellular location is the chloroplast thylakoid membrane. The catalysed reaction is L-ascorbate + H2O2 = L-dehydroascorbate + 2 H2O. Involved in defense response and tolerance to the bacterial pathogen Xanthomonas oryzae pv. oryzae (Xoo). Plays an important role in hydrogen peroxide removal during infection by Xoo. Involved in response to abiotic stress. Plays a role in hydrogen peroxide removal durings salt stress. This is Probable L-ascorbate peroxidase 8, chloroplastic from Oryza sativa subsp. japonica (Rice).